The following is a 543-amino-acid chain: MLLRSKPALPPPLMLLLLGPLGPLSPGALPRPAQAQDVVDLDFFTQEPLHLVSPSFLSVTIDANLATDPRFLILLGSPKLRTLARGLSPAYLRFGGTKTDFLIFDPKKESTFEERSYWQSQVNQDICKYGSIPPDVEEKLRLEWPYQEQLLLREHYQKKFKNSTYSRSSVDVLYTFANCSGLDLIFGLNALLRTADLQWNSSNAQLLLDYCSSKGYNISWELGNEPNSFLKKADIFINGSQLGEDFIQLHKLLRKSTFKNAKLYGPDVGQPRRKTAKMLKSFLKAGGEVIDSVTWHHYYLNGRTATKEDFLNPDVLDIFISSVQKVFQVVESTRPGKKVWLGETSSAYGGGAPLLSDTFAAGFMWLDKLGLSARMGIEVVMRQVFFGAGNYHLVDENFDPLPDYWLSLLFKKLVGTKVLMASVQGSKRRKLRVYLHCTNTDNPRYKEGDLTLYAINLHNVTKYLRLPYPFSNKQVDKYLLRPLGPHGLLSKSVQLNGLTLKMVDDQTLPPLMEKPLRPGSSLGLPAFSYSFFVIRNAKVAACI.

The first 35 residues, 1–35, serve as a signal peptide directing secretion; it reads MLLRSKPALPPPLMLLLLGPLGPLSPGALPRPAQA. Residues 62-64 and Thr97 each bind heparan sulfate group; that span reads DAN. Positions 110–157 are cleaved as a propeptide — linker peptide; sequence STFEERSYWQSQVNQDICKYGSIPPDVEEKLRLEWPYQEQLLLREHYQ. Residues Cys127 and Cys179 are joined by a disulfide bond. 158–162 serves as a coordination point for heparan sulfate group; it reads KKFKN. 4 N-linked (GlcNAc...) asparagine glycosylation sites follow: Asn162, Asn178, Asn200, and Asn217. Catalysis depends on Glu225, which acts as the Proton donor. The N-linked (GlcNAc...) asparagine glycan is linked to Asn238. Heparan sulfate group is bound by residues 270 to 280, His296, and Arg303; that span reads QPRRKTAKMLK. The tract at residues 288–417 is required for heterodimerization with the heparanase 8 kDa subunit; that stretch reads EVIDSVTWHH…LLFKKLVGTK (130 aa). Glu343 acts as the Nucleophile in catalysis. Heparan sulfate group contacts are provided by residues 348–350 and 389–391; these read YGG and GNY. A disulfide bridge connects residues Cys437 and Cys542. Asn459 carries N-linked (GlcNAc...) asparagine glycosylation. The tract at residues 527–543 is required for transferring proheparanase to the Golgi apparatus, secretion and subsequent enzyme activity and for enhancement of PKB/AKT1 phosphorylation; the sequence is FSYSFFVIRNAKVAACI.

This sequence belongs to the glycosyl hydrolase 79 family. In terms of assembly, heterodimer; heterodimer formation between the 8 kDa and the 50 kDa subunits is required for enzyme activity. Interacts with TF; the interaction, inhibited by heparin, enhances the generation of activated factor X and activates coagulation. Interacts with HRG; the interaction is enhanced at acidic pH, partially inhibits binding of HPSE to cell surface receptors and modulates its enzymatic activity. Interacts with SDC1; the interaction enhances the shedding of SDC1. Interacts with HPSE2. In terms of processing, proteolytically processed. The cleavage of the 65 kDa form leads to the generation of a linker peptide, and 8 kDa and 50 kDa products. The active form, the 8/50 kDa heterodimer, is resistant to degradation. Complete removal of the linker peptide appears to be a prerequisite to the complete activation of the enzyme. Post-translationally, N-glycosylated. Glycosylation of the 50 kDa subunit appears to be essential for its solubility. Highly expressed in placenta and spleen and weakly expressed in lymph node, thymus, peripheral blood leukocytes, bone marrow, endothelial cells, fetal liver and tumor tissues. Also expressed in hair follicles, specifically in both Henle's and Huxley's layers of inner the root sheath (IRS) at anagen phase.

The protein localises to the lysosome membrane. The protein resides in the secreted. It is found in the nucleus. It catalyses the reaction endohydrolysis of (1-&gt;4)-beta-D-glycosidic bonds of heparan sulfate chains in heparan sulfate proteoglycan.. Inhibited by EDTA, laminarin sulfate and, to a lower extent, by heparin and sulfamin and activated by calcium and magnesium. Its function is as follows. Endoglycosidase that cleaves heparan sulfate proteoglycans (HSPGs) into heparan sulfate side chains and core proteoglycans. Participates in extracellular matrix (ECM) degradation and remodeling. Selectively cleaves the linkage between a glucuronic acid unit and an N-sulfo glucosamine unit carrying either a 3-O-sulfo or a 6-O-sulfo group. Can also cleave the linkage between a glucuronic acid unit and an N-sulfo glucosamine unit carrying a 2-O-sulfo group, but not linkages between a glucuronic acid unit and a 2-O-sulfated iduronic acid moiety. It is essentially inactive at neutral pH but becomes active under acidic conditions such as during tumor invasion and in inflammatory processes. Facilitates cell migration associated with metastasis, wound healing and inflammation. Enhances shedding of syndecans, and increases endothelial invasion and angiogenesis in myelomas. Acts as a procoagulant by increasing the generation of activation factor X in the presence of tissue factor and activation factor VII. Increases cell adhesion to the extracellular matrix (ECM), independent of its enzymatic activity. Induces AKT1/PKB phosphorylation via lipid rafts increasing cell mobility and invasion. Heparin increases this AKT1/PKB activation. Regulates osteogenesis. Enhances angiogenesis through up-regulation of SRC-mediated activation of VEGF. Implicated in hair follicle inner root sheath differentiation and hair homeostasis. This chain is Heparanase (HPSE), found in Homo sapiens (Human).